Reading from the N-terminus, the 106-residue chain is Serine rich endogenous peptide 7 (106 aa).

An N-terminal signal peptide occupies residues Met1 to Ser26. Basic and acidic residues-rich tracts occupy residues Gly46–His56 and Arg65–Arg77. The interval Gly46–Ser106 is disordered. 2 short sequence motifs (SCOOP motif) span residues Leu58–His72 and Gly86–Arg100. Short sequence motifs (sxS motif essential for MIK2 binding) lie at residues Ser64 to Ser66 and Ser92 to Ser94.

It belongs to the serine rich endogenous peptide (SCOOP) phytocytokine family. Interacts with MIK2 (via extracellular leucine-rich repeat domain); this interaction triggers the formation of complex between MIK2 and the BAK1/SERK3 and SERK4 coreceptors, and subsequent BAK1 activation by phosphorylation. Mostly expressed in roots, and, to a lower extent, in seedlings shoots.

It is found in the cell membrane. Its subcellular location is the secreted. The protein localises to the extracellular space. The protein resides in the apoplast. In terms of biological role, brassicaceae-specific phytocytokine (plant endogenous peptide released into the apoplast) perceived by MIK2 in a BAK1/SERK3 and SERK4 coreceptors-dependent manner, that modulates various physiological and antimicrobial processes including growth prevention and reactive oxygen species (ROS) response regulation. This Arabidopsis thaliana (Mouse-ear cress) protein is Serine rich endogenous peptide 7.